Here is a 503-residue protein sequence, read N- to C-terminus: Maturase K (503 aa).

This sequence belongs to the intron maturase 2 family. MatK subfamily.

The protein resides in the plastid. Its subcellular location is the chloroplast. Usually encoded in the trnK tRNA gene intron. Probably assists in splicing its own and other chloroplast group II introns. The protein is Maturase K of Callistemon polandii (Gold-tipped bottlebrush).